Here is a 376-residue protein sequence, read N- to C-terminus: Protein STRICTOSIDINE SYNTHASE-LIKE 2 (376 aa).

An N-terminal signal peptide occupies residues 1–23 (MMKLLLVVATSVALIFSVTDLSG). N-linked (GlcNAc...) asparagine glycosylation is found at Asn79 and Asn244.

It belongs to the strictosidine synthase family.

It localises to the vacuole. The polypeptide is Protein STRICTOSIDINE SYNTHASE-LIKE 2 (Arabidopsis thaliana (Mouse-ear cress)).